We begin with the raw amino-acid sequence, 303 residues long: ATP synthase gamma chain (303 aa).

The protein belongs to the ATPase gamma chain family. F-type ATPases have 2 components, CF(1) - the catalytic core - and CF(0) - the membrane proton channel. CF(1) has five subunits: alpha(3), beta(3), gamma(1), delta(1), epsilon(1). CF(0) has three main subunits: a, b and c.

The protein localises to the cell inner membrane. Functionally, produces ATP from ADP in the presence of a proton gradient across the membrane. The gamma chain is believed to be important in regulating ATPase activity and the flow of protons through the CF(0) complex. This chain is ATP synthase gamma chain, found in Bartonella henselae (strain ATCC 49882 / DSM 28221 / CCUG 30454 / Houston 1) (Rochalimaea henselae).